Consider the following 678-residue polypeptide: Beta-catenin-like protein hmp-2 (678 aa).

5 ARM repeats span residues 153–192 (RGGPLLIFRSGGLAEIIRMLYDSLESVVHYAVTTLRNLLM), 280–319 (PSNKPALISLGCLPALYVELCTAKDERSQTAILVAMRNLS), 320–359 (DSATNEENLTQLIIKLLEIIRVANDGMTACACGTLSNLTC), 362–403 (TRNK…HCTA), and 409–448 (EEAQSELRFCQAFPVILDQLETLRTPVIKAALGVIRNSAL).

It belongs to the beta-catenin family. Component of a core catenin-cadherin complex consisting of hmr-1, hmp-1 and hmp-2; the complex localizes to adherens junctions. Interacts with hmr-1; the interaction is direct. May interact with hmp-1. Interacts with frk-1. In terms of tissue distribution, epidermal cells.

Its subcellular location is the cell junction. It localises to the adherens junction. Required for cell migration during body enclosure and cell shape changes during body elongation. Plays a role in recruitment of the cadherin protein hmr-1 to adherens junctions. This is Beta-catenin-like protein hmp-2 (hmp-2) from Caenorhabditis elegans.